The chain runs to 299 residues: Phosphatidylcholine-sterol acyltransferase (299 aa).

Asn-30 carries N-linked (GlcNAc...) asparagine glycosylation. The active-site Nucleophile is the Ser-127. A glycan (N-linked (GlcNAc...) asparagine) is linked at Asn-185. The cysteines at positions 226 and 269 are disulfide-linked. Catalysis depends on charge relay system residues Asp-258 and His-290.

It belongs to the AB hydrolase superfamily. Lipase family.

Its subcellular location is the secreted. The enzyme catalyses a sterol + a 1,2-diacyl-sn-glycero-3-phosphocholine = a sterol ester + a 1-acyl-sn-glycero-3-phosphocholine. With respect to regulation, APOA1 is the most potent activator in plasma. Also activated by APOE, APOC1 and APOA4. Its function is as follows. Central enzyme in the extracellular metabolism of plasma lipoproteins. Synthesized mainly in the liver and secreted into plasma where it converts cholesterol and phosphatidylcholines (lecithins) to cholesteryl esters and lysophosphatidylcholines on the surface of high and low density lipoproteins (HDLs and LDLs). The cholesterol ester is then transported back to the liver. Has a preference for plasma 16:0-18:2 or 18:O-18:2 phosphatidylcholines. Also produced in the brain by primary astrocytes, and esterifies free cholesterol on nascent APOE-containing lipoproteins secreted from glia and influences cerebral spinal fluid (CSF) APOE- and APOA1 levels. Together with APOE and the cholesterol transporter ABCA1, plays a key role in the maturation of glial-derived, nascent lipoproteins. Required for remodeling high-density lipoprotein particles into their spherical forms. The protein is Phosphatidylcholine-sterol acyltransferase (LCAT) of Eliomys quercinus (Garden dormouse).